We begin with the raw amino-acid sequence, 159 residues long: Ribosomal RNA large subunit methyltransferase H (159 aa).

Residues L76, G108, and 127–132 each bind S-adenosyl-L-methionine; that span reads FSKMTF.

The protein belongs to the RNA methyltransferase RlmH family. As to quaternary structure, homodimer.

The protein localises to the cytoplasm. The catalysed reaction is pseudouridine(1915) in 23S rRNA + S-adenosyl-L-methionine = N(3)-methylpseudouridine(1915) in 23S rRNA + S-adenosyl-L-homocysteine + H(+). Functionally, specifically methylates the pseudouridine at position 1915 (m3Psi1915) in 23S rRNA. The polypeptide is Ribosomal RNA large subunit methyltransferase H (Exiguobacterium sibiricum (strain DSM 17290 / CCUG 55495 / CIP 109462 / JCM 13490 / 255-15)).